Consider the following 715-residue polypeptide: MADPETAAKFKSKNAFPDPLNDPKCNPKSLVKKYLTPKVFESLKNKKTKLGITLWDCINSGVVNLDSGVGVYAGDEESYTLFGPLFDAIIEDYHSPYKLATGHNSDMNPAHVKAPDLDPANRYIRSTRIRVARSLKGYGLAPGVTKAHRLEIEKKVVGVLTSLTGDLAGKYYPLSGMDEKTRQQLVDDHFLFKKGDRFLEAAGINKEWPEGRGIYHNNDKTFLVWLNEEDHLRIISMEKGSDIGSVFSRLCRAVNEIDKKLGFQHTKKHGYLTSCPSNLGTGMRASVHVKIPHAKEHPDFENILTKYHIQARGIHGEHSESTGEDAGVYDISNRRRLGLSEVQCVQDMYDGVKALMELEKEAIAKKRSVFPEVLKNPEVKSLLRKYLTPELFDSLKDKKTAKGISLYDCINSGVENLDSSCGVYAGDEECYTLFAPLFDKIVEDYHSPYKLANKHTSDMNPEKVDAPNLDPEGTYIRSTRIRVARNVKGYALTPGLTRNERLDIERKVVGVLSSLTGDLAGQYYPLTGMDEATRQKLVNDHFLFKKGDRFLEAAGVNKLWPEGRGIFHNNDKTFLVWINEEDQLRIISMEKGSDIGSVFGRLCRAVNEIDKQLGFQHTDAHGYLSGCPTNLGTGMRASVHVKIPKASAHPDFQKICDEFHIQARGIHGEHSVSTGEDAGVFDISNRRRLGLSEVQCVQDMYNGVKKLLEIEKSTK.

Approximate repeat units follow at residues 1-366 and 367-715; these read MADP…IAKK and RSVF…KSTK. In terms of domain architecture, Phosphagen kinase N-terminal 1 spans 11-95; the sequence is KSKNAFPDPL…FDAIIEDYHS (85 aa). Residue 68–72 coordinates substrate; sequence GVGVY. The Phosphagen kinase C-terminal 1 domain occupies 123–362; the sequence is YIRSTRIRVA…KALMELEKEA (240 aa). ATP is bound by residues 126–130 and histidine 189; that span reads STRIR. Glutamate 229 provides a ligand contact to substrate. Residue arginine 233 coordinates ATP. Cysteine 275 is a substrate binding site. Residues 284–288 and 312–317 contribute to the ATP site; these read RASVH and RGIHGE. Residue glutamate 317 coordinates substrate. Positions 365–447 constitute a Phosphagen kinase N-terminal 2 domain; sequence KKRSVFPEVL…FDKIVEDYHS (83 aa). Residues 475–714 form the Phosphagen kinase C-terminal 2 domain; that stretch reads YIRSTRIRVA…KKLLEIEKST (240 aa).

This sequence belongs to the ATP:guanido phosphotransferase family. In terms of assembly, monomer.

The enzyme catalyses L-arginine + ATP = N(omega)-phospho-L-arginine + ADP + H(+). The polypeptide is Arginine kinase (Anthopleura japonica (Sea anemone)).